Here is a 554-residue protein sequence, read N- to C-terminus: Asparagine synthetase B [glutamine-hydrolyzing] (554 aa).

The For GATase activity role is filled by cysteine 2. The Glutamine amidotransferase type-2 domain occupies cysteine 2–glycine 186. L-glutamine-binding positions include arginine 50–valine 54, asparagine 75–glutamate 77, and aspartate 99. Residues leucine 233, valine 273, and serine 347–glycine 348 contribute to the ATP site.

Belongs to the asparagine synthetase family. In terms of assembly, homodimer.

The enzyme catalyses L-aspartate + L-glutamine + ATP + H2O = L-asparagine + L-glutamate + AMP + diphosphate + H(+). It participates in amino-acid biosynthesis; L-asparagine biosynthesis; L-asparagine from L-aspartate (L-Gln route): step 1/1. With respect to regulation, glutamine-dependent asparagine synthesis activity can be inhibited by aspartic acid analogs (such as a sulfinate derivative and (2S,3R)-2-amino-3-methylsuccinate) in vitro; the inhibition is competitive with respect to aspartate. Catalyzes the ATP-dependent conversion of aspartate into asparagine, using glutamine as a source of nitrogen. Can also use ammonia as the nitrogen source in vitro, albeit with lower efficiency. As nucleotide substrates, ATP and dATP are utilized at a similar rate in both the glutamine- and ammonia-dependent reactions, whereas GTP utilization is only 15% that of ATP, and CTP, UTP, ITP and XTP are very poor or not substrates. Also exhibits glutaminase activity. The polypeptide is Asparagine synthetase B [glutamine-hydrolyzing] (asnB) (Escherichia coli (strain K12)).